Consider the following 375-residue polypeptide: 2-heptyl-3-hydroxy-4(1H)-quinolone synthase (375 aa).

The protein belongs to the 3-hydroxybenzoate 6-hydroxylase family.

The enzyme catalyses 2-heptyl-4(1H)-quinolone + NADH + O2 + H(+) = 2-heptyl-3-hydroxy-4(1H)-quinolone + NAD(+) + H2O. Functionally, involved in the degradation pathway of the Pseudomonas aeruginosa quorum sensing signal molecule HHQ (2-heptyl-4(1H)-quinolone) to anthranilate. Catalyzes the hydroxylation of HHQ to PQS (2-heptyl-3-hydroxy-4(1H)-quinolone). The sequence is that of 2-heptyl-3-hydroxy-4(1H)-quinolone synthase from Mycobacteroides abscessus (strain ATCC 19977 / DSM 44196 / CCUG 20993 / CIP 104536 / JCM 13569 / NCTC 13031 / TMC 1543 / L948) (Mycobacterium abscessus).